A 534-amino-acid polypeptide reads, in one-letter code: Probable bifunctional tRNA threonylcarbamoyladenosine biosynthesis protein (534 aa).

Positions methionine 1–tryptophan 325 are kae1. Residues histidine 108, histidine 112, and tyrosine 129 each coordinate Fe cation. Residues tyrosine 129–glycine 133, aspartate 161, glycine 174, glutamate 178, and asparagine 258 each bind L-threonylcarbamoyladenylate. Fe cation is bound at residue aspartate 286. The Protein kinase domain maps to leucine 335 to aspartate 534. Residues leucine 340–isoleucine 348 and lysine 361 contribute to the ATP site. Residue aspartate 451 is the Proton acceptor; for kinase activity of the active site.

It in the N-terminal section; belongs to the KAE1 / TsaD family. The protein in the C-terminal section; belongs to the protein kinase superfamily. Tyr protein kinase family. BUD32 subfamily. In terms of assembly, component of the KEOPS complex that consists of Kae1, Bud32, Cgi121 and Pcc1; the whole complex dimerizes. It depends on Fe(2+) as a cofactor.

The protein localises to the cytoplasm. The catalysed reaction is L-seryl-[protein] + ATP = O-phospho-L-seryl-[protein] + ADP + H(+). The enzyme catalyses L-threonyl-[protein] + ATP = O-phospho-L-threonyl-[protein] + ADP + H(+). It catalyses the reaction L-threonylcarbamoyladenylate + adenosine(37) in tRNA = N(6)-L-threonylcarbamoyladenosine(37) in tRNA + AMP + H(+). In terms of biological role, required for the formation of a threonylcarbamoyl group on adenosine at position 37 (t(6)A37) in tRNAs that read codons beginning with adenine. Is a component of the KEOPS complex that is probably involved in the transfer of the threonylcarbamoyl moiety of threonylcarbamoyl-AMP (TC-AMP) to the N6 group of A37. The Kae1 domain likely plays a direct catalytic role in this reaction. The Bud32 domain probably displays kinase activity that regulates Kae1 function. The polypeptide is Probable bifunctional tRNA threonylcarbamoyladenosine biosynthesis protein (Methanothermobacter thermautotrophicus (strain ATCC 29096 / DSM 1053 / JCM 10044 / NBRC 100330 / Delta H) (Methanobacterium thermoautotrophicum)).